A 340-amino-acid chain; its full sequence is Centromere protein N (340 aa).

Phosphoserine is present on residues Ser-227 and Ser-236.

It belongs to the CENP-N/CHL4 family. In terms of assembly, component of the CENPA-NAC complex, at least composed of CENPA, CENPC, CENPH, CENPM, CENPN, CENPT and CENPU. The CENPA-NAC complex interacts with the CENPA-CAD complex, composed of CENPI, CENPK, CENPL, CENPO, CENPP, CENPQ, CENPR and CENPS. Interacts directly with CENPA. Identified in a centromere complex containing histones H2A, H2B and H4, and at least CENPA, CENPB, CENPC, CENPT, CENPN, HJURP, SUPT16H, SSRP1 and RSF1.

It is found in the nucleus. Its subcellular location is the chromosome. The protein localises to the centromere. It localises to the kinetochore. In terms of biological role, component of the CENPA-NAC (nucleosome-associated) complex, a complex that plays a central role in assembly of kinetochore proteins, mitotic progression and chromosome segregation. The CENPA-NAC complex recruits the CENPA-CAD (nucleosome distal) complex and may be involved in incorporation of newly synthesized CENPA into centromeres. CENPN is the first protein to bind specifically to CENPA nucleosomes and the direct binding of CENPA nucleosomes by CENPN is required for centromere assembly. Required for chromosome congression and efficiently align the chromosomes on a metaphase plate. The protein is Centromere protein N (Cenpn) of Rattus norvegicus (Rat).